We begin with the raw amino-acid sequence, 110 residues long: Inner kinetochore subunit mhf1 (110 aa).

The protein belongs to the TAF9 family. CENP-S/MHF1 subfamily. In terms of assembly, the MHF histone-fold complex is a heterotetramer of 2 mhf1-mhf2 heterodimers. Component of the inner kinetochore constitutive centromere-associated network (CCAN) (also known as central kinetochore Sim4 complex in fission yeast), which is composed of at least cnl2, cnp3, cnp20, fta1, fta2, fta3, fta4, fta6, fta7, mal2, mhf1, mhf2, mis6, mis15, mis17, sim4 and wip1.

It is found in the nucleus. Functionally, component of a FANCM-MHF complex that promotes gene conversion at blocked replication forks, probably by reversal of the stalled fork. FANCM-MHF promotes non-crossover recombination. The polypeptide is Inner kinetochore subunit mhf1 (Schizosaccharomyces pombe (strain 972 / ATCC 24843) (Fission yeast)).